The sequence spans 70 residues: DNA gyrase inhibitor YacG (70 aa).

4 residues coordinate Zn(2+): Cys9, Cys12, Cys28, and Cys32. Residues 43–70 (ESRKIPGSSIDPESIVTTNNKQDNVDEQ) are disordered.

This sequence belongs to the DNA gyrase inhibitor YacG family. Interacts with GyrB. Zn(2+) is required as a cofactor.

Its function is as follows. Inhibits all the catalytic activities of DNA gyrase by preventing its interaction with DNA. Acts by binding directly to the C-terminal domain of GyrB, which probably disrupts DNA binding by the gyrase. This is DNA gyrase inhibitor YacG from Legionella pneumophila (strain Corby).